A 959-amino-acid chain; its full sequence is Ribonucleoside-diphosphate reductase large subunit (959 aa).

Residues Thr68, Ser83–Cys84, and Gly112 each bind substrate. A disulfide bridge connects residues Cys84 and Cys626. Asn270 serves as the catalytic Proton acceptor. The region spanning Leu378–Val508 is the DOD-type homing endonuclease domain. Cys611 (cysteine radical intermediate) is an active-site residue. Glu613 (proton acceptor) is an active-site residue. Pro751–Ser755 contributes to the substrate binding site.

It belongs to the ribonucleoside diphosphate reductase large chain family. As to quaternary structure, heterotetramer composed of a homodimer of the large subunit (R1) and a homodimer of the small subunit (R2). Larger multisubunit protein complex are also active, composed of (R1)n(R2)n.

It catalyses the reaction a 2'-deoxyribonucleoside 5'-diphosphate + [thioredoxin]-disulfide + H2O = a ribonucleoside 5'-diphosphate + [thioredoxin]-dithiol. With respect to regulation, under complex allosteric control mediated by deoxynucleoside triphosphates and ATP binding. The type of nucleotide bound at the specificity site determines substrate preference. It seems probable that ATP makes the enzyme reduce CDP and UDP, dGTP favors ADP reduction and dTTP favors GDP reduction. In terms of biological role, ribonucleoside-diphosphate reductase holoenzyme provides the precursors necessary for viral DNA synthesis. Allows virus growth in non-dividing cells. Catalyzes the biosynthesis of deoxyribonucleotides from the corresponding ribonucleotides. The chain is Ribonucleoside-diphosphate reductase large subunit from Acheta domesticus (House cricket).